Consider the following 417-residue polypeptide: Tyrosine--tRNA ligase (417 aa).

Tyrosine 39 serves as a coordination point for L-tyrosine. Residues 44–53 (PTASSLHAGS) carry the 'HIGH' region motif. L-tyrosine-binding residues include tyrosine 176 and glutamine 180. Residues 236–240 (KMGKS) carry the 'KMSKS' region motif. Lysine 239 is an ATP binding site. The S4 RNA-binding domain maps to 350–417 (AGLLALLVQA…KKKHVLIKPL (68 aa)).

It belongs to the class-I aminoacyl-tRNA synthetase family. TyrS type 1 subfamily. In terms of assembly, homodimer.

It is found in the cytoplasm. It catalyses the reaction tRNA(Tyr) + L-tyrosine + ATP = L-tyrosyl-tRNA(Tyr) + AMP + diphosphate + H(+). In terms of biological role, catalyzes the attachment of tyrosine to tRNA(Tyr) in a two-step reaction: tyrosine is first activated by ATP to form Tyr-AMP and then transferred to the acceptor end of tRNA(Tyr). The chain is Tyrosine--tRNA ligase from Bartonella quintana (strain Toulouse) (Rochalimaea quintana).